Here is a 694-residue protein sequence, read N- to C-terminus: Glycine--tRNA ligase beta subunit (694 aa).

This sequence belongs to the class-II aminoacyl-tRNA synthetase family. In terms of assembly, tetramer of two alpha and two beta subunits.

Its subcellular location is the cytoplasm. It carries out the reaction tRNA(Gly) + glycine + ATP = glycyl-tRNA(Gly) + AMP + diphosphate. The polypeptide is Glycine--tRNA ligase beta subunit (Lactiplantibacillus plantarum (strain ATCC BAA-793 / NCIMB 8826 / WCFS1) (Lactobacillus plantarum)).